Here is a 68-residue protein sequence, read N- to C-terminus: ATP synthase F(0) complex subunit 8 (68 aa).

A helical transmembrane segment spans residues 8–24 (VWPTMIAPMLLTLFLIT). Lys-54 carries the post-translational modification N6-acetyllysine; alternate. The residue at position 54 (Lys-54) is an N6-succinyllysine; alternate. Lys-57 bears the N6-acetyllysine mark.

Belongs to the ATPase protein 8 family. As to quaternary structure, component of the ATP synthase complex composed at least of ATP5F1A/subunit alpha, ATP5F1B/subunit beta, ATP5MC1/subunit c (homooctomer), MT-ATP6/subunit a, MT-ATP8/subunit 8, ATP5ME/subunit e, ATP5MF/subunit f, ATP5MG/subunit g, ATP5MK/subunit k, ATP5MJ/subunit j, ATP5F1C/subunit gamma, ATP5F1D/subunit delta, ATP5F1E/subunit epsilon, ATP5PF/subunit F6, ATP5PB/subunit b, ATP5PD/subunit d, ATP5PO/subunit OSCP. ATP synthase complex consists of a soluble F(1) head domain (subunits alpha(3) and beta(3)) - the catalytic core - and a membrane F(0) domain - the membrane proton channel (subunits c, a, 8, e, f, g, k and j). These two domains are linked by a central stalk (subunits gamma, delta, and epsilon) rotating inside the F1 region and a stationary peripheral stalk (subunits F6, b, d, and OSCP). Interacts with PRICKLE3.

Its subcellular location is the mitochondrion membrane. Functionally, subunit 8, of the mitochondrial membrane ATP synthase complex (F(1)F(0) ATP synthase or Complex V) that produces ATP from ADP in the presence of a proton gradient across the membrane which is generated by electron transport complexes of the respiratory chain. ATP synthase complex consist of a soluble F(1) head domain - the catalytic core - and a membrane F(1) domain - the membrane proton channel. These two domains are linked by a central stalk rotating inside the F(1) region and a stationary peripheral stalk. During catalysis, ATP synthesis in the catalytic domain of F(1) is coupled via a rotary mechanism of the central stalk subunits to proton translocation. In vivo, can only synthesize ATP although its ATP hydrolase activity can be activated artificially in vitro. Part of the complex F(0) domain. This Gorilla gorilla gorilla (Western lowland gorilla) protein is ATP synthase F(0) complex subunit 8.